We begin with the raw amino-acid sequence, 238 residues long: MAQVSMRDMLNAGVHYGHQTRYWNPKMKPFIFGARNGVHVINLEKTLPLFNEALAELTRISSNNGKILFVGTKRAASEAVKAAAVDCQQFYVNHRWLGGMLTNWKTVRQSIKRLKDLETQTQDGTFDKITKKEALMRTRELEKLELSLGGIKDMAGLPDAIFVIGADHEHIAIKEANNLGIPVFAIVDTNSTPDGVNYIIPGNDDATRAIQLYLDAAAAAVKEGRGSNVEAELEATAE.

This sequence belongs to the universal ribosomal protein uS2 family.

This is Small ribosomal subunit protein uS2 from Actinobacillus pleuropneumoniae serotype 7 (strain AP76).